A 319-amino-acid polypeptide reads, in one-letter code: ATP-dependent 6-phosphofructokinase (319 aa).

G11 provides a ligand contact to ATP. ADP is bound at residue 21–25 (RAVVR). ATP-binding positions include 72–73 (RY) and 102–105 (GDGS). Position 103 (D103) interacts with Mg(2+). 125-127 (TID) is a substrate binding site. The active-site Proton acceptor is the D127. R154 contacts ADP. Substrate contacts are provided by residues R162 and 169 to 171 (MGR). ADP contacts are provided by residues 185-187 (GAE), R211, and 213-215 (KKH). Residues E222, R243, and 249–252 (HVQR) each bind substrate.

The protein belongs to the phosphofructokinase type A (PFKA) family. ATP-dependent PFK group I subfamily. Prokaryotic clade 'B1' sub-subfamily. As to quaternary structure, homotetramer. It depends on Mg(2+) as a cofactor.

The protein resides in the cytoplasm. The enzyme catalyses beta-D-fructose 6-phosphate + ATP = beta-D-fructose 1,6-bisphosphate + ADP + H(+). It functions in the pathway carbohydrate degradation; glycolysis; D-glyceraldehyde 3-phosphate and glycerone phosphate from D-glucose: step 3/4. With respect to regulation, allosterically activated by ADP and other diphosphonucleosides, and allosterically inhibited by phosphoenolpyruvate. Catalyzes the phosphorylation of D-fructose 6-phosphate to fructose 1,6-bisphosphate by ATP, the first committing step of glycolysis. This chain is ATP-dependent 6-phosphofructokinase, found in Listeria welshimeri serovar 6b (strain ATCC 35897 / DSM 20650 / CCUG 15529 / CIP 8149 / NCTC 11857 / SLCC 5334 / V8).